A 289-amino-acid polypeptide reads, in one-letter code: uncharacterized protein (289 aa).

Residues 1–23 (MIKNYKLLLFTTFTLFFITFVSG) form the signal peptide. N-linked (GlcNAc...) asparagine glycosylation is found at Asn-74, Asn-101, Asn-132, and Asn-285.

The protein localises to the secreted. This is an uncharacterized protein from Dictyostelium discoideum (Social amoeba).